A 128-amino-acid polypeptide reads, in one-letter code: Small ribosomal subunit protein eS6 (128 aa).

This sequence belongs to the eukaryotic ribosomal protein eS6 family.

This is Small ribosomal subunit protein eS6 from Thermoplasma volcanium (strain ATCC 51530 / DSM 4299 / JCM 9571 / NBRC 15438 / GSS1).